A 297-amino-acid polypeptide reads, in one-letter code: Release factor glutamine methyltransferase (297 aa).

S-adenosyl-L-methionine-binding positions include 134 to 138 (GTGSG), Asp157, and Asn200. Residue 200-203 (NPPY) participates in substrate binding.

The protein belongs to the protein N5-glutamine methyltransferase family. PrmC subfamily.

It carries out the reaction L-glutaminyl-[peptide chain release factor] + S-adenosyl-L-methionine = N(5)-methyl-L-glutaminyl-[peptide chain release factor] + S-adenosyl-L-homocysteine + H(+). Methylates the class 1 translation termination release factors RF1/PrfA and RF2/PrfB on the glutamine residue of the universally conserved GGQ motif. The protein is Release factor glutamine methyltransferase of Bradyrhizobium diazoefficiens (strain JCM 10833 / BCRC 13528 / IAM 13628 / NBRC 14792 / USDA 110).